The sequence spans 612 residues: Kelch-like protein 40a (612 aa).

Positions 34–101 (VDCILKIKDK…IYTSDINLTE (68 aa)) constitute a BTB domain. One can recognise a BACK domain in the interval 136–238 (CLAIFRLGLL…PTSYFKEKVE (103 aa)). Residues 266–275 (RVKRSSHRKE) show a composition bias toward basic residues. The interval 266 to 290 (RVKRSSHRKEGKSAEFESDDDDEDG) is disordered. A compositionally biased stretch (acidic residues) spans 281-290 (FESDDDDEDG). 5 Kelch repeats span residues 350-402 (QIFV…EAEN), 403-452 (SIYV…SHKG), 453-500 (LVYV…VHKN), 502-547 (IYVV…ELGG), and 549-604 (LYAI…GVRL).

It belongs to the KLHL40 family. As to quaternary structure, component of the BCR(KLHL40) E3 ubiquitin ligase complex. In terms of tissue distribution, expressed in skeletal muscle and heart. Detected, although at much lower levels, in brain, eye and fin.

The protein resides in the cytoplasm. The protein localises to the myofibril. It localises to the sarcomere. It is found in the a band. Its subcellular location is the i band. Substrate-specific adapter of a BCR (BTB-CUL3-RBX1) E3 ubiquitin ligase complex. Required for skeletal muscle development. The polypeptide is Kelch-like protein 40a (klhl40a) (Danio rerio (Zebrafish)).